The following is a 124-amino-acid chain: Small ribosomal subunit protein uS12 (124 aa).

A disordered region spans residues 1–22 (MATINQLVRKPRSRKVAKSDVP). Residue aspartate 89 is modified to 3-methylthioaspartic acid. A disordered region spans residues 104–124 (TAGVNDRRQGRSKYGAKRGKS). The segment covering 113-124 (GRSKYGAKRGKS) has biased composition (basic residues).

Belongs to the universal ribosomal protein uS12 family. In terms of assembly, part of the 30S ribosomal subunit. Contacts proteins S8 and S17. May interact with IF1 in the 30S initiation complex.

Its function is as follows. With S4 and S5 plays an important role in translational accuracy. In terms of biological role, interacts with and stabilizes bases of the 16S rRNA that are involved in tRNA selection in the A site and with the mRNA backbone. Located at the interface of the 30S and 50S subunits, it traverses the body of the 30S subunit contacting proteins on the other side and probably holding the rRNA structure together. The combined cluster of proteins S8, S12 and S17 appears to hold together the shoulder and platform of the 30S subunit. The chain is Small ribosomal subunit protein uS12 from Hahella chejuensis (strain KCTC 2396).